The chain runs to 667 residues: DNA ligase (667 aa).

Residues 34–38 (DAEYD), 83–84 (SL), and Glu113 contribute to the NAD(+) site. The N6-AMP-lysine intermediate role is filled by Lys115. Arg136, Glu170, Lys286, and Lys310 together coordinate NAD(+). 4 residues coordinate Zn(2+): Cys404, Cys407, Cys422, and Cys427. The 79-residue stretch at 589–667 (ATDSVLSGKT…EQQLEDVVGK (79 aa)) folds into the BRCT domain.

The protein belongs to the NAD-dependent DNA ligase family. LigA subfamily. The cofactor is Mg(2+). Mn(2+) serves as cofactor.

The catalysed reaction is NAD(+) + (deoxyribonucleotide)n-3'-hydroxyl + 5'-phospho-(deoxyribonucleotide)m = (deoxyribonucleotide)n+m + AMP + beta-nicotinamide D-nucleotide.. In terms of biological role, DNA ligase that catalyzes the formation of phosphodiester linkages between 5'-phosphoryl and 3'-hydroxyl groups in double-stranded DNA using NAD as a coenzyme and as the energy source for the reaction. It is essential for DNA replication and repair of damaged DNA. The polypeptide is DNA ligase (Oceanobacillus iheyensis (strain DSM 14371 / CIP 107618 / JCM 11309 / KCTC 3954 / HTE831)).